The chain runs to 37 residues: Mu-agatoxin-Aa1d (37 aa).

Cystine bridges form between Cys2–Cys18, Cys9–Cys23, Cys17–Cys33, and Cys25–Cys31. Asn37 is subject to Asparagine amide.

This sequence belongs to the neurotoxin 07 (Beta/delta-agtx) family. 03 (aga-4) subfamily. Aga sub-subfamily. In terms of tissue distribution, expressed by the venom gland.

The protein resides in the secreted. Insecticidal neurotoxin that induces an irreversible spastic paralysis when injected into insects. Modifies presynaptic voltage-gated sodium channels (Nav), causing them to open at the normal resting potential of the nerve. This leads to spontaneous release of neurotransmitter and repetitive action potentials in motor neurons. The protein is Mu-agatoxin-Aa1d of Agelenopsis aperta (North American funnel-web spider).